The sequence spans 213 residues: Large ribosomal subunit protein uL3 (213 aa).

Residues 131–155 (GRASHGNSVSHRAHGSTGNNQDPGR) form a disordered region. Over residues 135-152 (HGNSVSHRAHGSTGNNQD) the composition is skewed to polar residues. Residue Q151 is modified to N5-methylglutamine.

Belongs to the universal ribosomal protein uL3 family. Part of the 50S ribosomal subunit. Forms a cluster with proteins L14 and L19. In terms of processing, methylated by PrmB.

Its function is as follows. One of the primary rRNA binding proteins, it binds directly near the 3'-end of the 23S rRNA, where it nucleates assembly of the 50S subunit. This is Large ribosomal subunit protein uL3 from Agrobacterium fabrum (strain C58 / ATCC 33970) (Agrobacterium tumefaciens (strain C58)).